The chain runs to 300 residues: 3-methyl-2-oxobutanoate hydroxymethyltransferase (300 aa).

2 residues coordinate Mg(2+): Asp-75 and Asp-118. 3-methyl-2-oxobutanoate is bound by residues 75–76 (DS), Asp-118, and Lys-147. Glu-149 lines the Mg(2+) pocket. Glu-216 (proton acceptor) is an active-site residue.

It belongs to the PanB family. Homodecamer; pentamer of dimers. The cofactor is Mg(2+).

The protein resides in the cytoplasm. The catalysed reaction is 3-methyl-2-oxobutanoate + (6R)-5,10-methylene-5,6,7,8-tetrahydrofolate + H2O = 2-dehydropantoate + (6S)-5,6,7,8-tetrahydrofolate. It participates in cofactor biosynthesis; (R)-pantothenate biosynthesis; (R)-pantoate from 3-methyl-2-oxobutanoate: step 1/2. Functionally, catalyzes the reversible reaction in which hydroxymethyl group from 5,10-methylenetetrahydrofolate is transferred onto alpha-ketoisovalerate to form ketopantoate. This is 3-methyl-2-oxobutanoate hydroxymethyltransferase from Verminephrobacter eiseniae (strain EF01-2).